A 191-amino-acid chain; its full sequence is Small ribosomal subunit protein eS7y (191 aa).

Met1 bears the N-acetylmethionine mark. Positions 17–50 form a coiled coil; it reads TEFEEQVTQALFDLENTNQELKSELKDLYINQAV.

Belongs to the eukaryotic ribosomal protein eS7 family.

This is Small ribosomal subunit protein eS7y (RPS7B) from Arabidopsis thaliana (Mouse-ear cress).